The sequence spans 734 residues: Photosystem I P700 chlorophyll a apoprotein A2 (734 aa).

The next 8 helical transmembrane spans lie at 46-69 (IFAS…FHVA), 135-158 (LYTG…LHLQ), 175-199 (LNHH…HVAI), 273-291 (IAHH…GHMY), 330-353 (IHFQ…QHMY), 369-395 (AALY…IFFI), 417-439 (AIIS…LYVH), and 517-535 (FLVH…LILV). [4Fe-4S] cluster is bound by residues C559 and C568. 2 helical membrane passes run 575-596 (AFYL…YWHW) and 643-665 (LSVW…MFLI). Chlorophyll a-binding residues include H654, M662, and Y670. W671 contributes to the phylloquinone binding site. The chain crosses the membrane as a helical span at residues 707–727 (LVGLAHFSVGYIFTYAAFLIA).

It belongs to the PsaA/PsaB family. As to quaternary structure, the PsaA/B heterodimer binds the P700 chlorophyll special pair and subsequent electron acceptors. PSI consists of a core antenna complex that captures photons, and an electron transfer chain that converts photonic excitation into a charge separation. The eukaryotic PSI reaction center is composed of at least 11 subunits. The cofactor is P700 is a chlorophyll a/chlorophyll a' dimer, A0 is one or more chlorophyll a, A1 is one or both phylloquinones and FX is a shared 4Fe-4S iron-sulfur center..

The protein resides in the plastid. It localises to the chloroplast thylakoid membrane. It carries out the reaction reduced [plastocyanin] + hnu + oxidized [2Fe-2S]-[ferredoxin] = oxidized [plastocyanin] + reduced [2Fe-2S]-[ferredoxin]. PsaA and PsaB bind P700, the primary electron donor of photosystem I (PSI), as well as the electron acceptors A0, A1 and FX. PSI is a plastocyanin-ferredoxin oxidoreductase, converting photonic excitation into a charge separation, which transfers an electron from the donor P700 chlorophyll pair to the spectroscopically characterized acceptors A0, A1, FX, FA and FB in turn. Oxidized P700 is reduced on the lumenal side of the thylakoid membrane by plastocyanin. This chain is Photosystem I P700 chlorophyll a apoprotein A2, found in Phaseolus vulgaris (Kidney bean).